The sequence spans 235 residues: tRNA (adenine(37)-N6)-methyltransferase (235 aa).

The region spanning 6-147 (FEQIGVIRSP…YLPFAESLPD (142 aa)) is the TsaA-like domain. Residues 23-25 (PRQ), 64-65 (HQ), Arg92, and 127-130 (VDGT) contribute to the S-adenosyl-L-methionine site.

Belongs to the tRNA methyltransferase O family. In terms of assembly, homodimer.

It carries out the reaction N(6)-L-threonylcarbamoyladenosine(37) in tRNA + S-adenosyl-L-methionine = N(6)-methyl,N(6)-L-threonylcarbamoyladenosine(37) in tRNA + S-adenosyl-L-homocysteine + H(+). S-adenosyl-L-methionine-dependent methyltransferase responsible for the addition of the methyl group in the formation of N6-methyl-N6-threonylcarbamoyladenosine at position 37 (m(6)t(6)A37) of the tRNA anticodon loop of tRNA(Thr)(GGU) that read codons starting with adenosine. The methyl group of m(6)t(6)A37 appears to slightly improve the efficiency of the tRNA decoding ability. In Escherichia coli (strain K12), this protein is tRNA (adenine(37)-N6)-methyltransferase.